Consider the following 525-residue polypeptide: Peptide chain release factor 3 (525 aa).

One can recognise a tr-type G domain in the interval 11–279 (DKRRTFAIIS…TYLEYAPQPA (269 aa)). GTP contacts are provided by residues 20–27 (SHPDAGKT), 88–92 (DTPGH), and 142–145 (NKLD).

The protein belongs to the TRAFAC class translation factor GTPase superfamily. Classic translation factor GTPase family. PrfC subfamily.

The protein resides in the cytoplasm. Increases the formation of ribosomal termination complexes and stimulates activities of RF-1 and RF-2. It binds guanine nucleotides and has strong preference for UGA stop codons. It may interact directly with the ribosome. The stimulation of RF-1 and RF-2 is significantly reduced by GTP and GDP, but not by GMP. This is Peptide chain release factor 3 from Levilactobacillus brevis (strain ATCC 367 / BCRC 12310 / CIP 105137 / JCM 1170 / LMG 11437 / NCIMB 947 / NCTC 947) (Lactobacillus brevis).